Here is a 554-residue protein sequence, read N- to C-terminus: CTP synthase (554 aa).

Positions 1–265 are amidoligase domain; that stretch reads MTPLIFVTGG…DELVIEQFKL (265 aa). Ser13 lines the CTP pocket. Ser13 contacts UTP. ATP is bound by residues 14 to 19 and Asp71; that span reads SLGKGI. 2 residues coordinate Mg(2+): Asp71 and Glu139. CTP-binding positions include 146-148, 186-191, and Lys222; these read DIE and KTKPTQ. UTP is bound by residues 186-191 and Lys222; that span reads KTKPTQ. In terms of domain architecture, Glutamine amidotransferase type-1 spans 292-545; the sequence is NIAVVGKYVD…VRAAREKKAG (254 aa). Gly353 provides a ligand contact to L-glutamine. Cys380 acts as the Nucleophile; for glutamine hydrolysis in catalysis. L-glutamine-binding positions include 381–384, Glu404, and Arg471; that span reads YGMQ. Residues His518 and Glu520 contribute to the active site.

The protein belongs to the CTP synthase family. As to quaternary structure, homotetramer.

It catalyses the reaction UTP + L-glutamine + ATP + H2O = CTP + L-glutamate + ADP + phosphate + 2 H(+). The catalysed reaction is L-glutamine + H2O = L-glutamate + NH4(+). The enzyme catalyses UTP + NH4(+) + ATP = CTP + ADP + phosphate + 2 H(+). It functions in the pathway pyrimidine metabolism; CTP biosynthesis via de novo pathway; CTP from UDP: step 2/2. Allosterically activated by GTP, when glutamine is the substrate; GTP has no effect on the reaction when ammonia is the substrate. The allosteric effector GTP functions by stabilizing the protein conformation that binds the tetrahedral intermediate(s) formed during glutamine hydrolysis. Inhibited by the product CTP, via allosteric rather than competitive inhibition. Its function is as follows. Catalyzes the ATP-dependent amination of UTP to CTP with either L-glutamine or ammonia as the source of nitrogen. Regulates intracellular CTP levels through interactions with the four ribonucleotide triphosphates. In Xanthomonas euvesicatoria pv. vesicatoria (strain 85-10) (Xanthomonas campestris pv. vesicatoria), this protein is CTP synthase.